The following is a 449-amino-acid chain: MSRNYFGTDGIRGRANGLITPELALKVGQAAGLLFQRGEHRHRVVIGKDTRLSGYMIEYAMVAGFTSVGMDVLLVGPMPTPAVAMLTKSMRADLGVMISASHNLFEDNGIKLFGPQGFKLSDDVEKQIEQLLDESLDKKLAQSASLGRARRIDGVHDRYIEFAKRTLPRDLSLDGLRVVVDCANGAAYKVVPEALWELGADVISIGVEPDGFNINKECGSTSPEALCRKVREMRADIGIALDGDADRVILVDERGHIVDGDQLLAVIAQSWKEDGRLSRPGIVATVMSNLGLERFLQGQGLELVRTPVGDRYVLERMLADGYNLGGEQSGHIILSDYATTGDGFVAALQVLATVQKLRRPVSEVCHKFDPLPQILKNVRYRSGKPLDTDAVKSAIDTGQKRLNGHGRLLVRSSGTEPVIRVMGEGDDRNLVEEVVDDIVTAVGNAAAAA.

S101 serves as the catalytic Phosphoserine intermediate. 4 residues coordinate Mg(2+): S101, D242, D244, and D246. The residue at position 101 (S101) is a Phosphoserine.

Belongs to the phosphohexose mutase family. The cofactor is Mg(2+). In terms of processing, activated by phosphorylation.

It catalyses the reaction alpha-D-glucosamine 1-phosphate = D-glucosamine 6-phosphate. Catalyzes the conversion of glucosamine-6-phosphate to glucosamine-1-phosphate. The polypeptide is Phosphoglucosamine mutase (Bradyrhizobium sp. (strain ORS 278)).